The sequence spans 455 residues: Exodeoxyribonuclease 7 large subunit (455 aa).

The protein belongs to the XseA family. As to quaternary structure, heterooligomer composed of large and small subunits.

It localises to the cytoplasm. It carries out the reaction Exonucleolytic cleavage in either 5'- to 3'- or 3'- to 5'-direction to yield nucleoside 5'-phosphates.. In terms of biological role, bidirectionally degrades single-stranded DNA into large acid-insoluble oligonucleotides, which are then degraded further into small acid-soluble oligonucleotides. This Escherichia coli (strain SMS-3-5 / SECEC) protein is Exodeoxyribonuclease 7 large subunit.